The chain runs to 252 residues: Imidazole glycerol phosphate synthase subunit HisF (252 aa).

Residues Asp12 and Asp131 contribute to the active site.

It belongs to the HisA/HisF family. As to quaternary structure, heterodimer of HisH and HisF.

Its subcellular location is the cytoplasm. The enzyme catalyses 5-[(5-phospho-1-deoxy-D-ribulos-1-ylimino)methylamino]-1-(5-phospho-beta-D-ribosyl)imidazole-4-carboxamide + L-glutamine = D-erythro-1-(imidazol-4-yl)glycerol 3-phosphate + 5-amino-1-(5-phospho-beta-D-ribosyl)imidazole-4-carboxamide + L-glutamate + H(+). The protein operates within amino-acid biosynthesis; L-histidine biosynthesis; L-histidine from 5-phospho-alpha-D-ribose 1-diphosphate: step 5/9. Its function is as follows. IGPS catalyzes the conversion of PRFAR and glutamine to IGP, AICAR and glutamate. The HisF subunit catalyzes the cyclization activity that produces IGP and AICAR from PRFAR using the ammonia provided by the HisH subunit. In Thermus thermophilus (strain ATCC 27634 / DSM 579 / HB8), this protein is Imidazole glycerol phosphate synthase subunit HisF.